A 107-amino-acid chain; its full sequence is Proteinase inhibitor 1 (107 aa).

The signal sequence occupies residues Met-1 to Ala-23. The propeptide occupies Arg-24–Leu-36.

The protein belongs to the protease inhibitor I13 (potato type I serine protease inhibitor) family.

The chain is Proteinase inhibitor 1 from Solanum tuberosum (Potato).